We begin with the raw amino-acid sequence, 442 residues long: tRNA modification GTPase MnmE (442 aa).

(6S)-5-formyl-5,6,7,8-tetrahydrofolate is bound by residues Arg27, Glu84, and Lys124. Residues Gly221–Glu366 enclose the TrmE-type G domain. GTP contacts are provided by residues Asn231 to Ser236, Ser250 to Thr256, and Asp275 to Gly278. The Mg(2+) site is built by Ser235 and Thr256. Lys442 is a binding site for (6S)-5-formyl-5,6,7,8-tetrahydrofolate.

Belongs to the TRAFAC class TrmE-Era-EngA-EngB-Septin-like GTPase superfamily. TrmE GTPase family. In terms of assembly, homodimer. Heterotetramer of two MnmE and two MnmG subunits. The cofactor is K(+).

The protein localises to the cytoplasm. Exhibits a very high intrinsic GTPase hydrolysis rate. Involved in the addition of a carboxymethylaminomethyl (cmnm) group at the wobble position (U34) of certain tRNAs, forming tRNA-cmnm(5)s(2)U34. This chain is tRNA modification GTPase MnmE, found in Brucella canis (strain ATCC 23365 / NCTC 10854 / RM-666).